The sequence spans 200 residues: Superoxide dismutase [Mn] 1 (200 aa).

Residues histidine 29, histidine 76, aspartate 158, and histidine 162 each contribute to the Mn(2+) site.

It belongs to the iron/manganese superoxide dismutase family. Homodimer or homotetramer. Mn(2+) serves as cofactor.

It catalyses the reaction 2 superoxide + 2 H(+) = H2O2 + O2. Its activity is regulated as follows. Inhibited by hydrogen peroxide. Is resistant to cyanide and azide inhibition. Functionally, destroys superoxide anion radicals which are normally produced within the cells and which are toxic to biological systems. The polypeptide is Superoxide dismutase [Mn] 1 (sod1) (Halobacterium salinarum (strain ATCC 700922 / JCM 11081 / NRC-1) (Halobacterium halobium)).